A 150-amino-acid chain; its full sequence is Transcription antitermination protein NusB (150 aa).

The protein belongs to the NusB family.

Its function is as follows. Involved in transcription antitermination. Required for transcription of ribosomal RNA (rRNA) genes. Binds specifically to the boxA antiterminator sequence of the ribosomal RNA (rrn) operons. This chain is Transcription antitermination protein NusB, found in Streptococcus pyogenes serotype M6 (strain ATCC BAA-946 / MGAS10394).